The following is a 404-amino-acid chain: Cysteine desulfurase IscS (404 aa).

Pyridoxal 5'-phosphate is bound by residues 75–76 (AT), asparagine 155, glutamine 183, and 203–205 (SAH). Lysine 206 carries the N6-(pyridoxal phosphate)lysine modification. Threonine 243 is a binding site for pyridoxal 5'-phosphate. The active-site Cysteine persulfide intermediate is the cysteine 328. Cysteine 328 contacts [2Fe-2S] cluster.

It belongs to the class-V pyridoxal-phosphate-dependent aminotransferase family. NifS/IscS subfamily. Homodimer. Forms a heterotetramer with IscU, interacts with other sulfur acceptors. Pyridoxal 5'-phosphate is required as a cofactor.

Its subcellular location is the cytoplasm. The enzyme catalyses (sulfur carrier)-H + L-cysteine = (sulfur carrier)-SH + L-alanine. The protein operates within cofactor biosynthesis; iron-sulfur cluster biosynthesis. In terms of biological role, master enzyme that delivers sulfur to a number of partners involved in Fe-S cluster assembly, tRNA modification or cofactor biosynthesis. Catalyzes the removal of elemental sulfur atoms from cysteine to produce alanine. Functions as a sulfur delivery protein for Fe-S cluster synthesis onto IscU, an Fe-S scaffold assembly protein, as well as other S acceptor proteins. The chain is Cysteine desulfurase IscS from Pseudomonas syringae pv. syringae (strain B728a).